A 701-amino-acid polypeptide reads, in one-letter code: Elongation factor G (701 aa).

Residues 11 to 287 (TKVRNIGIMA…AVIDYLPSPL (277 aa)) form the tr-type G domain. GTP is bound by residues 20 to 27 (AHIDAGKT), 84 to 88 (DTPGH), and 138 to 141 (NKMD).

This sequence belongs to the TRAFAC class translation factor GTPase superfamily. Classic translation factor GTPase family. EF-G/EF-2 subfamily.

The protein resides in the cytoplasm. Its function is as follows. Catalyzes the GTP-dependent ribosomal translocation step during translation elongation. During this step, the ribosome changes from the pre-translocational (PRE) to the post-translocational (POST) state as the newly formed A-site-bound peptidyl-tRNA and P-site-bound deacylated tRNA move to the P and E sites, respectively. Catalyzes the coordinated movement of the two tRNA molecules, the mRNA and conformational changes in the ribosome. In Mycobacterium ulcerans (strain Agy99), this protein is Elongation factor G.